Consider the following 384-residue polypeptide: 8-amino-7-oxononanoate synthase (384 aa).

Arginine 21 is a substrate binding site. 108–109 (GF) contacts pyridoxal 5'-phosphate. Histidine 133 lines the substrate pocket. Serine 179, histidine 207, and threonine 233 together coordinate pyridoxal 5'-phosphate. Position 236 is an N6-(pyridoxal phosphate)lysine (lysine 236). Threonine 352 contacts substrate.

Belongs to the class-II pyridoxal-phosphate-dependent aminotransferase family. BioF subfamily. Homodimer. The cofactor is pyridoxal 5'-phosphate.

The catalysed reaction is 6-carboxyhexanoyl-[ACP] + L-alanine + H(+) = (8S)-8-amino-7-oxononanoate + holo-[ACP] + CO2. It functions in the pathway cofactor biosynthesis; biotin biosynthesis. Catalyzes the decarboxylative condensation of pimeloyl-[acyl-carrier protein] and L-alanine to produce 8-amino-7-oxononanoate (AON), [acyl-carrier protein], and carbon dioxide. The polypeptide is 8-amino-7-oxononanoate synthase (Escherichia coli O7:K1 (strain IAI39 / ExPEC)).